The chain runs to 513 residues: 2-isopropylmalate synthase (513 aa).

A Pyruvate carboxyltransferase domain is found at 7–269 (VYIFDTTLRD…TTGIVTEELF (263 aa)). 4 residues coordinate Mn(2+): Asp16, His204, His206, and Asn240. The regulatory domain stretch occupies residues 393 to 513 (ALQFLSVHCG…KEEERTCPQL (121 aa)).

Belongs to the alpha-IPM synthase/homocitrate synthase family. LeuA type 1 subfamily. In terms of assembly, homodimer. Requires Mn(2+) as cofactor.

The protein resides in the cytoplasm. The catalysed reaction is 3-methyl-2-oxobutanoate + acetyl-CoA + H2O = (2S)-2-isopropylmalate + CoA + H(+). Its pathway is amino-acid biosynthesis; L-leucine biosynthesis; L-leucine from 3-methyl-2-oxobutanoate: step 1/4. Its function is as follows. Catalyzes the condensation of the acetyl group of acetyl-CoA with 3-methyl-2-oxobutanoate (2-ketoisovalerate) to form 3-carboxy-3-hydroxy-4-methylpentanoate (2-isopropylmalate). In Solidesulfovibrio magneticus (strain ATCC 700980 / DSM 13731 / RS-1) (Desulfovibrio magneticus), this protein is 2-isopropylmalate synthase.